The primary structure comprises 192 residues: Probable GTP-binding protein EngB (192 aa).

Residues 22 to 192 (QIPEIVFAGR…LLAHLAQYIR (171 aa)) form the EngB-type G domain. Residues 30-37 (GRSNVGKS), 57-61 (GKTRL), 75-78 (DLPG), 142-145 (TKDD), and 172-174 (YSS) each bind GTP. Ser37 and Thr59 together coordinate Mg(2+).

Belongs to the TRAFAC class TrmE-Era-EngA-EngB-Septin-like GTPase superfamily. EngB GTPase family. The cofactor is Mg(2+).

Functionally, necessary for normal cell division and for the maintenance of normal septation. This Chlorobium phaeobacteroides (strain DSM 266 / SMG 266 / 2430) protein is Probable GTP-binding protein EngB.